The following is a 612-amino-acid chain: Putative pentatricopeptide repeat-containing protein At5g40405 (612 aa).

PPR repeat units lie at residues 70 to 104 (TLFA…GNDL), 107 to 141 (DNYT…GFDN), 142 to 172 (DPHV…IPCP), 173 to 203 (DFVC…MPER), 204 to 238 (DPIA…GVKV), 239 to 273 (NGVA…KIKI), 274 to 304 (TVRL…MEEK), 305 to 339 (NVYT…GVTP), 340 to 375 (NAVT…GIEP), and 376 to 410 (QLEH…PHAA). The tract at residues 411 to 486 (VWSSLLHASR…QPGCSVMEVN (76 aa)) is type E motif. The interval 487–517 (GEVHEFFVGDKSHPKYTQIDAVWKDISRRLR) is type E(+) motif. The type DYW motif stretch occupies residues 518–612 (LAGYKADTTP…DGHCSCNGFW (95 aa)).

The protein belongs to the PPR family. PCMP-H subfamily.

This is Putative pentatricopeptide repeat-containing protein At5g40405 (PCMP-H14) from Arabidopsis thaliana (Mouse-ear cress).